The sequence spans 384 residues: Succinyl-diaminopimelate desuccinylase (384 aa).

His-71 is a Zn(2+) binding site. Asp-73 is a catalytic residue. A Zn(2+)-binding site is contributed by Asp-104. The active-site Proton acceptor is Glu-138. The Zn(2+) site is built by Glu-139, Glu-167, and His-353.

Belongs to the peptidase M20A family. DapE subfamily. Homodimer. Zn(2+) serves as cofactor. It depends on Co(2+) as a cofactor.

The catalysed reaction is N-succinyl-(2S,6S)-2,6-diaminopimelate + H2O = (2S,6S)-2,6-diaminopimelate + succinate. It participates in amino-acid biosynthesis; L-lysine biosynthesis via DAP pathway; LL-2,6-diaminopimelate from (S)-tetrahydrodipicolinate (succinylase route): step 3/3. Functionally, catalyzes the hydrolysis of N-succinyl-L,L-diaminopimelic acid (SDAP), forming succinate and LL-2,6-diaminopimelate (DAP), an intermediate involved in the bacterial biosynthesis of lysine and meso-diaminopimelic acid, an essential component of bacterial cell walls. This is Succinyl-diaminopimelate desuccinylase from Aromatoleum aromaticum (strain DSM 19018 / LMG 30748 / EbN1) (Azoarcus sp. (strain EbN1)).